The following is a 498-amino-acid chain: Glycerol kinase (498 aa).

An ADP-binding site is contributed by Thr-12. ATP contacts are provided by Thr-12, Thr-13, and Ser-14. Thr-12 serves as a coordination point for sn-glycerol 3-phosphate. Arg-16 contributes to the ADP binding site. The sn-glycerol 3-phosphate site is built by Arg-82, Glu-83, Tyr-134, and Asp-243. Positions 82, 83, 134, 243, and 244 each coordinate glycerol. ADP contacts are provided by Thr-265 and Gly-308. Residues Thr-265, Gly-308, Gln-312, and Gly-409 each coordinate ATP. ADP-binding residues include Gly-409 and Asn-413.

The protein belongs to the FGGY kinase family. In terms of assembly, homotetramer and homodimer (in equilibrium).

It carries out the reaction glycerol + ATP = sn-glycerol 3-phosphate + ADP + H(+). Its pathway is polyol metabolism; glycerol degradation via glycerol kinase pathway; sn-glycerol 3-phosphate from glycerol: step 1/1. Its activity is regulated as follows. Activated by phosphorylation and inhibited by fructose 1,6-bisphosphate (FBP). Its function is as follows. Key enzyme in the regulation of glycerol uptake and metabolism. Catalyzes the phosphorylation of glycerol to yield sn-glycerol 3-phosphate. The chain is Glycerol kinase from Clostridium botulinum (strain 657 / Type Ba4).